Reading from the N-terminus, the 125-residue chain is Small ribosomal subunit protein uS12 (125 aa).

The interval 1 to 28 (MPTINQLVRKGREKVKKKSKAPALEGNP) is disordered. Over residues 9 to 20 (RKGREKVKKKSK) the composition is skewed to basic residues. Asp89 is modified (3-methylthioaspartic acid). Residues 104–125 (AAGVKDRKQSRSKYGTKRPKEK) are disordered. Basic residues predominate over residues 113-125 (SRSKYGTKRPKEK).

This sequence belongs to the universal ribosomal protein uS12 family. In terms of assembly, part of the 30S ribosomal subunit. Contacts proteins S8 and S17. May interact with IF1 in the 30S initiation complex.

With S4 and S5 plays an important role in translational accuracy. Functionally, interacts with and stabilizes bases of the 16S rRNA that are involved in tRNA selection in the A site and with the mRNA backbone. Located at the interface of the 30S and 50S subunits, it traverses the body of the 30S subunit contacting proteins on the other side and probably holding the rRNA structure together. The combined cluster of proteins S8, S12 and S17 appears to hold together the shoulder and platform of the 30S subunit. The protein is Small ribosomal subunit protein uS12 of Persephonella marina (strain DSM 14350 / EX-H1).